The primary structure comprises 363 residues: Ferrochelatase (363 aa).

Residues His-209 and Glu-290 each coordinate Fe cation.

This sequence belongs to the ferrochelatase family.

It is found in the cytoplasm. It catalyses the reaction heme b + 2 H(+) = protoporphyrin IX + Fe(2+). Its pathway is porphyrin-containing compound metabolism; protoheme biosynthesis; protoheme from protoporphyrin-IX: step 1/1. Functionally, catalyzes the ferrous insertion into protoporphyrin IX. This is Ferrochelatase from Azoarcus sp. (strain BH72).